A 457-amino-acid polypeptide reads, in one-letter code: Siroheme synthase (457 aa).

The tract at residues 1-204 (MDHLPIFCQL…NDQKAITETT (204 aa)) is precorrin-2 dehydrogenase /sirohydrochlorin ferrochelatase. NAD(+) contacts are provided by residues 22-23 (DV) and 43-44 (LA). At serine 128 the chain carries Phosphoserine. The interval 216 to 457 (GEVVLVGAGP…RDKLNWFSNH (242 aa)) is uroporphyrinogen-III C-methyltransferase. S-adenosyl-L-methionine is bound at residue proline 225. Aspartate 248 acts as the Proton acceptor in catalysis. Catalysis depends on lysine 270, which acts as the Proton donor. S-adenosyl-L-methionine contacts are provided by residues 301–303 (GGD), isoleucine 306, 331–332 (TA), methionine 382, and glycine 411.

It in the N-terminal section; belongs to the precorrin-2 dehydrogenase / sirohydrochlorin ferrochelatase family. In the C-terminal section; belongs to the precorrin methyltransferase family.

It carries out the reaction uroporphyrinogen III + 2 S-adenosyl-L-methionine = precorrin-2 + 2 S-adenosyl-L-homocysteine + H(+). The catalysed reaction is precorrin-2 + NAD(+) = sirohydrochlorin + NADH + 2 H(+). The enzyme catalyses siroheme + 2 H(+) = sirohydrochlorin + Fe(2+). It participates in cofactor biosynthesis; adenosylcobalamin biosynthesis; precorrin-2 from uroporphyrinogen III: step 1/1. It functions in the pathway cofactor biosynthesis; adenosylcobalamin biosynthesis; sirohydrochlorin from precorrin-2: step 1/1. The protein operates within porphyrin-containing compound metabolism; siroheme biosynthesis; precorrin-2 from uroporphyrinogen III: step 1/1. Its pathway is porphyrin-containing compound metabolism; siroheme biosynthesis; siroheme from sirohydrochlorin: step 1/1. It participates in porphyrin-containing compound metabolism; siroheme biosynthesis; sirohydrochlorin from precorrin-2: step 1/1. In terms of biological role, multifunctional enzyme that catalyzes the SAM-dependent methylations of uroporphyrinogen III at position C-2 and C-7 to form precorrin-2 via precorrin-1. Then it catalyzes the NAD-dependent ring dehydrogenation of precorrin-2 to yield sirohydrochlorin. Finally, it catalyzes the ferrochelation of sirohydrochlorin to yield siroheme. In Escherichia coli O157:H7 (strain EC4115 / EHEC), this protein is Siroheme synthase.